The following is a 354-amino-acid chain: Guanine nucleotide-binding protein G(i) subunit alpha (354 aa).

Gly2 is lipidated: N-myristoyl glycine. The S-palmitoyl cysteine moiety is linked to residue Cys3. The region spanning 32-354 (REVKLLLLGA…KNNLKDCGLF (323 aa)) is the G-alpha domain. The interval 35–48 (KLLLLGAGESGKST) is G1 motif. GTP is bound by residues 40 to 47 (GAGESGKS), 175 to 181 (LRTRVKT), 200 to 204 (DVGGQ), 269 to 272 (NKKD), and Ala326. The Mg(2+) site is built by Ser47 and Thr181. The G2 motif stretch occupies residues 173-181 (DVLRTRVKT). Residues 196-205 (FKMFDVGGQR) are G3 motif. Residues 265-272 (ILFLNKKD) form a G4 motif region. The tract at residues 324-329 (TCATDT) is G5 motif.

It belongs to the G-alpha family. G(i/o/t/z) subfamily. G proteins are composed of 3 units; alpha, beta and gamma. The alpha chain contains the guanine nucleotide binding site.

In terms of biological role, guanine nucleotide-binding proteins (G proteins) are involved as modulators or transducers in various transmembrane signaling systems. This chain is Guanine nucleotide-binding protein G(i) subunit alpha, found in Planorbella trivolvis (Marsh rams-horn).